A 329-amino-acid polypeptide reads, in one-letter code: DNA-directed RNA polymerase subunit alpha (329 aa).

Residues 1–235 are alpha N-terminal domain (alpha-NTD); it reads MVREKVKVST…DLFIPFLHTE (235 aa). The segment at 269–329 is alpha C-terminal domain (alpha-CTD); it reads IALKYIFIDQ…KQILGILEKK (61 aa).

Belongs to the RNA polymerase alpha chain family. In plastids the minimal PEP RNA polymerase catalytic core is composed of four subunits: alpha, beta, beta', and beta''. When a (nuclear-encoded) sigma factor is associated with the core the holoenzyme is formed, which can initiate transcription.

Its subcellular location is the plastid. It is found in the chloroplast. The catalysed reaction is RNA(n) + a ribonucleoside 5'-triphosphate = RNA(n+1) + diphosphate. Its function is as follows. DNA-dependent RNA polymerase catalyzes the transcription of DNA into RNA using the four ribonucleoside triphosphates as substrates. The chain is DNA-directed RNA polymerase subunit alpha from Gossypium hirsutum (Upland cotton).